The following is a 789-amino-acid chain: SH3 domain-containing protein 19 (789 aa).

Disordered regions lie at residues 24–170 (TNTE…PPRL), 209–404 (DDDV…RPKP), and 472–497 (TPLD…SGAP). Serine 65 is modified (phosphoserine). The span at 296-305 (SHSDRTRNPE) shows a compositional bias: basic and acidic residues. Over residues 335–351 (WRPPPKGAPERPPPPKL) the composition is skewed to pro residues. The span at 352 to 361 (PASKSSNKNL) shows a compositional bias: low complexity. The residue at position 368 (serine 368) is a Phosphoserine. SH3 domains follow at residues 414–476 (LSVP…PLDE), 494–553 (SGAP…VIVD), 570–629 (AKGP…LVGD), 660–719 (PPGE…PCPA), and 729–788 (PKGR…FLQV). Over residues 474 to 484 (LDERPRGRPND) the composition is skewed to basic and acidic residues. The tract at residues 635–663 (ANILSTKVPPKTKNEDPGSNSQDSSPPGE) is disordered.

As to quaternary structure, interacts with ADAM12. Isoform 2 (but not isoform 1) interacts with ADAM9, ADAM10, ADAM15 and ADAM17. Interacts with SH3GL1 SH3 domain. Interacts via SH3 3 and SH3 4 or SH3 4 and SH3 5 domains with SOS2. Probably forms a trimeric complex with SH3GL1 and SOS2. Interacts with SH3YL1. Expressed in hair follicles.

The protein localises to the cytoplasm. Its function is as follows. May play a role in regulating A disintegrin and metalloproteases (ADAMs) in the signaling of EGFR-ligand shedding. May be involved in suppression of Ras-induced cellular transformation and Ras-mediated activation of ELK1. Plays a role in the regulation of cell morphology and cytoskeletal organization. In Mus musculus (Mouse), this protein is SH3 domain-containing protein 19 (Sh3d19).